A 142-amino-acid polypeptide reads, in one-letter code: Universal stress protein C (142 aa).

Belongs to the universal stress protein A family.

The protein resides in the cytoplasm. In terms of biological role, required for resistance to DNA-damaging agents. This is Universal stress protein C (uspC) from Escherichia coli O6:H1 (strain CFT073 / ATCC 700928 / UPEC).